The primary structure comprises 190 residues: Selenoprotein S (190 aa).

A helical transmembrane segment spans residues 28 to 48 (SLLASYGWYILFSCVLLYIVI). The VCP/p97-interacting motif (VIM) stretch occupies residues 78-90 (RQEALAAARLRMQ). A disordered region spans residues 96-190 (QVEKHKEKQR…RRGPSSGGUS (95 aa)). The span at 97–118 (VEKHKEKQRQLEEEKRRQKIEM) shows a compositional bias: basic and acidic residues. Residues 160-174 (RGGGYNPLTGEGGGT) are compositionally biased toward gly residues. Sec-189 is a non-standard amino acid (selenocysteine).

Belongs to the selenoprotein S family. In terms of assembly, interacts with DERL1 and (via VIM motif) with VCP, suggesting that it forms a membrane complex with DERL1 that serves as a receptor for VCP. Also interacts with DERL2, DERL3 and SELENOK. The SELENOK-SELENOS complex interacts with VCP. Interacts with CCDC47. Truncated SELENOS proteins produced by failed UGA/Sec decoding are ubiquitinated by the CRL2(KLHDC2) and CRL2(KLHDC3) complexes, which recognizes the glycine (Gly) at the C-terminus of truncated SELENOS proteins. Truncated SELENOS proteins produced by failed UGA/Sec decoding are also ubiquitinated by the CRL5(KLHDC1) complex.

The protein localises to the endoplasmic reticulum membrane. The protein resides in the cytoplasm. Involved in the degradation process of misfolded endoplasmic reticulum (ER) luminal proteins. Participates in the transfer of misfolded proteins from the ER to the cytosol, where they are destroyed by the proteasome in a ubiquitin-dependent manner. Probably acts by serving as a linker between DERL1, which mediates the retrotranslocation of misfolded proteins into the cytosol, and the ATPase complex VCP, which mediates the translocation and ubiquitination. The polypeptide is Selenoprotein S (Rattus norvegicus (Rat)).